Here is a 274-residue protein sequence, read N- to C-terminus: MPSASSPRARLAALAVAALAAAPLAASAQPKAARGKTEVTWYGHAAFLVTTPGGTVLAIDPWLSNPKAPEPGLAEKLPKVDYILVSHGHFDHVGDAVALAKRTGAKLITNFDLGSSLVAAGYPKDQAGMDTLGNMGGTIQAGDAAVTMVAAVHSSGFADDKGAAHPGGNPMGFVIQVKGGPTLYHTGDTDLTQDMKQLPERFGRVDVMLTCIGGHFTMDPKAAAIAVGYVRPRTVVPMHFGTFPAIAGTPEELRAALKGKAEVRVLEPGKPVAF.

The protein belongs to the UPF0173 family.

This chain is UPF0173 metal-dependent hydrolase AnaeK_1127, found in Anaeromyxobacter sp. (strain K).